The following is a 617-amino-acid chain: NADPH-dependent diflavin oxidoreductase 1 (617 aa).

A Flavodoxin-like domain is found at 3–147 (PMILYASETG…AFLPWLQQTL (145 aa)). FMN-binding positions include 9-14 (SETGNA), 56-59 (STHG), 94-103 (LGDSSYERFC), and E129. The region spanning 226–465 (DDWVWATLKK…HIASPTLFLP (240 aa)) is the FAD-binding FR-type domain. FAD-binding positions include 404 to 407 (RQFS) and 438 to 441 (GLCS). Residues T479, 534 to 535 (SR), and 540 to 544 (RIYVQ) contribute to the NADP(+) site. W617 provides a ligand contact to FAD.

The protein belongs to the NADPH-dependent diflavin oxidoreductase NDOR1 family. It in the N-terminal section; belongs to the flavodoxin family. In the C-terminal section; belongs to the flavoprotein pyridine nucleotide cytochrome reductase family. In terms of assembly, interacts with DRE2; as part of the cytosolic iron-sulfur (Fe-S) protein assembly (CIA) machinery. It depends on FAD as a cofactor. FMN serves as cofactor.

Its subcellular location is the cytoplasm. The protein localises to the mitochondrion. The enzyme catalyses 2 oxidized [2Fe-2S]-[protein] + NADPH = 2 reduced [2Fe-2S]-[protein] + NADP(+) + H(+). Functionally, NADPH-dependent reductase which is a central component of the cytosolic iron-sulfur (Fe-S) protein assembly (CIA) machinery. Transfers electrons from NADPH via its FAD and FMN prosthetic groups to the [2Fe-2S] cluster of DRE2, another key component of the CIA machinery. In turn, this reduced cluster provides electrons for assembly of cytosolic iron-sulfur cluster proteins. Positively controls H(2)O(2)-induced cell death. The polypeptide is NADPH-dependent diflavin oxidoreductase 1 (Cryptococcus neoformans var. neoformans serotype D (strain B-3501A) (Filobasidiella neoformans)).